The sequence spans 537 residues: Lysine--tRNA ligase (537 aa).

Residues 30–38 carry the 'HIGH' region motif; it reads PSGNIHIGN. The short motif at 276 to 280 is the 'KMSKS' region element; sequence AMSSS.

It belongs to the class-I aminoacyl-tRNA synthetase family.

Its subcellular location is the cytoplasm. It catalyses the reaction tRNA(Lys) + L-lysine + ATP = L-lysyl-tRNA(Lys) + AMP + diphosphate. In Methanosarcina barkeri (strain Fusaro / DSM 804), this protein is Lysine--tRNA ligase.